Consider the following 377-residue polypeptide: Cyclin-I (377 aa).

A disordered region spans residues 356–377; it reads TDLSRQEGHASPCPPLQPVSVM. Residues 367–377 show a composition bias toward pro residues; sequence PCPPLQPVSVM.

It belongs to the cyclin family.

The polypeptide is Cyclin-I (Ccni) (Mus musculus (Mouse)).